The primary structure comprises 78 residues: Calcium/calmodulin-dependent protein kinase II inhibitor 1 (78 aa).

Residues 41–68 (SKRPPKLGQIGRSKRVVIEDDRIDDVLK) form a CAMK2 inhibitory domain region.

This sequence belongs to the CAMK2N family. Interacts with CAMK2B; the presence of Ca(2+)/calmodulin increases the interaction but is not essential. Interacts with CAMK2A; this interaction requires CAMK2A activation by Ca(2+). Expressed in the brain (at protein level). Expressed in cardiomyocytes but not cardiac fibroblasts (at protein level).

The protein resides in the synapse. It localises to the cell projection. Its subcellular location is the dendrite. The protein localises to the postsynaptic density. Its function is as follows. Potent and specific inhibitor of CaM-kinase II (CAMK2). Plays a role in the maintenance of long-term retrieval-induced memory in response to contextual fear. Modulates blood pressure and vascular reactivity via regulation of CAMK2 activity in addition to regulation of left ventricular mass. Mediates the NLRP3 inflammasome in cardiomyocytes via acting as an inhibitor of the MAPK14/p38 and MAPK8/JNK pathways, thereby regulating ventricular remodeling and cardiac rhythm post-myocardial infarction. Negatively effects insulin sensitivity and promotes lipid formation in adipose tissues independent of CAMK2 signaling. The protein is Calcium/calmodulin-dependent protein kinase II inhibitor 1 (Camk2n1) of Mus musculus (Mouse).